The primary structure comprises 269 residues: 5'-nucleotidase SurE (269 aa).

A divalent metal cation-binding residues include Asp11, Asp12, Ser43, and Asn101.

The protein belongs to the SurE nucleotidase family. A divalent metal cation serves as cofactor.

The protein resides in the cytoplasm. It catalyses the reaction a ribonucleoside 5'-phosphate + H2O = a ribonucleoside + phosphate. Its function is as follows. Nucleotidase that shows phosphatase activity on nucleoside 5'-monophosphates. This chain is 5'-nucleotidase SurE, found in Prochlorococcus marinus (strain MIT 9313).